A 347-amino-acid polypeptide reads, in one-letter code: Methylthioribose-1-phosphate isomerase (347 aa).

Residues 45–47 (RGA), Arg-88, and Gln-197 contribute to the substrate site. Residue Asp-238 is the Proton donor of the active site. 248 to 249 (NK) lines the substrate pocket.

Belongs to the eIF-2B alpha/beta/delta subunits family. MtnA subfamily.

The catalysed reaction is 5-(methylsulfanyl)-alpha-D-ribose 1-phosphate = 5-(methylsulfanyl)-D-ribulose 1-phosphate. It participates in amino-acid biosynthesis; L-methionine biosynthesis via salvage pathway; L-methionine from S-methyl-5-thio-alpha-D-ribose 1-phosphate: step 1/6. Catalyzes the interconversion of methylthioribose-1-phosphate (MTR-1-P) into methylthioribulose-1-phosphate (MTRu-1-P). The chain is Methylthioribose-1-phosphate isomerase from Nostoc sp. (strain PCC 7120 / SAG 25.82 / UTEX 2576).